Reading from the N-terminus, the 369-residue chain is Omega-amidase, chloroplastic (369 aa).

Residues methionine 1–methionine 63 constitute a chloroplast transit peptide. Alanine 64 is subject to N-acetylalanine. One can recognise a CN hydrolase domain in the interval phenylalanine 88 to tyrosine 337. The active-site Proton acceptor is glutamate 127. Lysine 201 serves as the catalytic Proton donor. Cysteine 242 serves as the catalytic Nucleophile.

This sequence belongs to the nitrilase superfamily. NIT1/NIT2 family.

It is found in the plastid. Its subcellular location is the chloroplast. It carries out the reaction a monoamide of a dicarboxylate + H2O = a dicarboxylate + NH4(+). Its function is as follows. Omega-amidase involved in the metabolism of asparagine. Probably also closely coupled with glutamine transamination in the methionine salvage cycle. Can use alpha-ketosuccinamate and alpha-hydroxysuccinamate as substrates, producing respectively oxaloacetate and malate, or alpha-ketoglutaramate, producing alpha-ketoglutarate. In Arabidopsis thaliana (Mouse-ear cress), this protein is Omega-amidase, chloroplastic.